Reading from the N-terminus, the 306-residue chain is Bacitracin transport ATP-binding protein BcrA (306 aa).

The region spanning 5–233 (IKTTDLTKMY…NRKYLEFQLS (229 aa)) is the ABC transporter domain. Residue 37 to 44 (GRNGAGKT) participates in ATP binding.

It belongs to the ABC transporter superfamily.

Part of the binding-protein-dependent transport system for bacitracin that confer resistance to this antibiotic. Probably responsible for energy coupling to the transport system. The sequence is that of Bacitracin transport ATP-binding protein BcrA (bcrA) from Bacillus licheniformis.